We begin with the raw amino-acid sequence, 460 residues long: Serine incorporator 5 (460 aa).

Over 1-36 (MCTPCCVSQLACCCGSAACSLCCGCCPKIKQSTSTR) the chain is Extracellular. A helical membrane pass occupies residues 37 to 57 (FMYALFFMLVTVTCVIMMSPT). The Cytoplasmic portion of the chain corresponds to 58–89 (VEMAMREHIPFYSQMCQQLNAGENCSTLVGYS). A helical transmembrane segment spans residues 90–110 (AVYKVCFGMACFFFFFAVFTI). At 111–124 (RVQNSTGCRAAVHN) the chain is on the extracellular side. Residue Asn114 is glycosylated (N-linked (GlcNAc...) asparagine). Residues 125–145 (GFWFFKFVALLACCAGGFFLP) form a helical membrane-spanning segment. The Cytoplasmic portion of the chain corresponds to 146–156 (NQDQFLEVWRY). Residues 157–177 (VGAAGGFLFIIIQLMLLVQFA) traverse the membrane as a helical segment. The Extracellular portion of the chain corresponds to 178–197 (HRWNQNWSSGATYNKLWYAA). Asn183 carries N-linked (GlcNAc...) asparagine glycosylation. The chain crosses the membrane as a helical span at residues 198–218 (LALVTLVLFSVAVGGMVFMFM). Over 219-230 (YYTHPEACFLNK) the chain is Cytoplasmic. A helical transmembrane segment spans residues 231-251 (IFLGVNGGLCFIVSLLAISPC). Over 252–259 (IQTFQPTS) the chain is Extracellular. Residues 260-280 (GLLQPAVITLYVMYLTFSALA) form a helical membrane-spanning segment. Over 281-311 (SKPIEMVEDEIKGNITVCVFPFKSGLKSDTN) the chain is Cytoplasmic. Residues 312-332 (IVTGVGTAILFCCILYSCLIS) form a helical membrane-spanning segment. At 333-391 (TTKRSSAALQVYRNDMPENERARCCFCWVDDTEDYDDEKTSGGQNVKYDERDGTVYSYC) the chain is on the extracellular side. A helical membrane pass occupies residues 392-412 (FFHFVFFLGSLYVMMTVTNWF). The Cytoplasmic portion of the chain corresponds to 413–433 (HYDNAKIERLLEGSWSVFWIK). Residues 434–454 (MASSWVCLFFYMWTLVVPMLF) form a helical membrane-spanning segment. At 455 to 460 (PQRFQA) the chain is on the extracellular side.

It belongs to the TDE1 family.

It is found in the cell membrane. The catalysed reaction is a 1,2-diacyl-sn-glycero-3-phospho-L-serine(in) = a 1,2-diacyl-sn-glycero-3-phospho-L-serine(out). It catalyses the reaction a 1,2-diacyl-sn-glycero-3-phosphocholine(in) = a 1,2-diacyl-sn-glycero-3-phosphocholine(out). The enzyme catalyses a 1,2-diacyl-sn-glycero-3-phosphoethanolamine(in) = a 1,2-diacyl-sn-glycero-3-phosphoethanolamine(out). Its function is as follows. Restriction factor required to restrict infectivity of gammaretroviruses: acts by inhibiting an early step of viral infection. Impairs the penetration of the viral particle into the cytoplasm. Non-ATP-dependent, non-specific lipid transporter for phosphatidylserine, phosphatidylcholine, and phosphatidylethanolamine. Functions as a scramblase that flips lipids in both directions across the membrane. Phospholipid scrambling results in gammaretroviral surface exposure of phosphatidylserine and loss of membrane asymmetry, which leads to loss of infectivity. Enhances the incorporation of serine into phosphatidylserine and sphingolipids. The sequence is that of Serine incorporator 5 (serinc5) from Danio rerio (Zebrafish).